Consider the following 445-residue polypeptide: Phosphoglucosamine mutase (445 aa).

Ser102 acts as the Phosphoserine intermediate in catalysis. Mg(2+) contacts are provided by Ser102, Asp241, Asp243, and Asp245. Ser102 is modified (phosphoserine).

This sequence belongs to the phosphohexose mutase family. The cofactor is Mg(2+). In terms of processing, activated by phosphorylation.

It catalyses the reaction alpha-D-glucosamine 1-phosphate = D-glucosamine 6-phosphate. Its function is as follows. Catalyzes the conversion of glucosamine-6-phosphate to glucosamine-1-phosphate. In Aliivibrio fischeri (strain MJ11) (Vibrio fischeri), this protein is Phosphoglucosamine mutase.